The following is a 238-amino-acid chain: 3-dehydroquinate dehydratase (238 aa).

3-dehydroquinate is bound by residues 35-37 (ELR) and arginine 70. Histidine 133 functions as the Proton donor/acceptor in the catalytic mechanism. Lysine 160 functions as the Schiff-base intermediate with substrate in the catalytic mechanism. 3-dehydroquinate contacts are provided by arginine 202 and glutamine 225.

It belongs to the type-I 3-dehydroquinase family. In terms of assembly, homodimer.

It catalyses the reaction 3-dehydroquinate = 3-dehydroshikimate + H2O. It participates in metabolic intermediate biosynthesis; chorismate biosynthesis; chorismate from D-erythrose 4-phosphate and phosphoenolpyruvate: step 3/7. Involved in the third step of the chorismate pathway, which leads to the biosynthesis of aromatic amino acids. Catalyzes the cis-dehydration of 3-dehydroquinate (DHQ) and introduces the first double bond of the aromatic ring to yield 3-dehydroshikimate. In Staphylococcus aureus (strain bovine RF122 / ET3-1), this protein is 3-dehydroquinate dehydratase.